The following is a 302-amino-acid chain: Glycine--tRNA ligase alpha subunit (302 aa).

It belongs to the class-II aminoacyl-tRNA synthetase family. Tetramer of two alpha and two beta subunits.

The protein localises to the cytoplasm. It catalyses the reaction tRNA(Gly) + glycine + ATP = glycyl-tRNA(Gly) + AMP + diphosphate. In Haemophilus influenzae (strain ATCC 51907 / DSM 11121 / KW20 / Rd), this protein is Glycine--tRNA ligase alpha subunit (glyQ).